Reading from the N-terminus, the 537-residue chain is Trypsin-resistant surface T6 protein (537 aa).

An N-terminal signal peptide occupies residues 1 to 22; the sequence is MLACLAILAVVGLGMTRVSALS. Residues 310–330 form a hydrophilic region; sequence GNTYDNLDKKPDKGNGITSKE. The LPXTG sorting signal signature appears at 504-508; it reads LPSTG. The residue at position 507 (Thr-507) is a Pentaglycyl murein peptidoglycan amidated threonine. Positions 508-537 are cleaved as a propeptide — removed by sortase; it reads GSIGTYLFKAIGSAAMIGAIGIYIVKRRKA.

The protein localises to the secreted. The protein resides in the cell wall. The sequence is that of Trypsin-resistant surface T6 protein (tee6) from Streptococcus pyogenes serotype M6 (strain ATCC BAA-946 / MGAS10394).